The primary structure comprises 352 residues: MKQTILDLMRMSRICRMVLATCLGSFILVIFYFQSMFQPVMRRNPFAAEGCCRKGSRNALQELYNPTQAEFSAAAVLHQARRDQVAETCRAHSASSRKRRVLTPSDLKHLVVDEDHELIYCYVPKVACTNWKRVMMVLSGRGKYSNPMEIPSNEAHVPSNLKTLNQYSIPDINHRLKNYLKFLFVREPFERLVSAYRNKFTLRYNTSFHKRYGTKIVRRYRKNATTEALQSGADVKFQEFAEYLVDPGTQREAPLNEHWQTVYSLCHPCHIHYDLVGKYETLEDDANYVLKLVGEGDSLRFPSFAKSTRTTDQMAAMFFGNISSQQQSQLYQLYKLDYLMFNYSIPSYLKLQ.

Over 1-16 the chain is Cytoplasmic; that stretch reads MKQTILDLMRMSRICR. The helical; Signal-anchor for type II membrane protein transmembrane segment at 17–37 threads the bilayer; sequence MVLATCLGSFILVIFYFQSMF. Residues 38–352 are Lumenal-facing; that stretch reads QPVMRRNPFA…YSIPSYLKLQ (315 aa). 3'-phosphoadenylyl sulfate-binding positions include 124 to 130 and 186 to 194; these read PKVACTN and REPFERLVS. N-linked (GlcNAc...) asparagine glycosylation is found at Asn-205, Asn-223, Asn-321, and Asn-342.

The protein belongs to the sulfotransferase 2 family.

Its subcellular location is the golgi apparatus membrane. It carries out the reaction chondroitin beta-D-glucuronate + n 3'-phosphoadenylyl sulfate = chondroitin 4'-sulfate + n adenosine 3',5'-bisphosphate + n H(+). Catalyzes the transfer of sulfate to position 4 of the N-acetylgalactosamine (GalNAc) residue of chondroitin. This chain is Carbohydrate sulfotransferase 11 (chst11), found in Danio rerio (Zebrafish).